Here is a 336-residue protein sequence, read N- to C-terminus: Glycerol-3-phosphate dehydrogenase [NAD(P)+] (336 aa).

4 residues coordinate NADPH: Ser-16, Tyr-17, His-37, and Lys-111. Residues Lys-111, Gly-140, and Thr-142 each contribute to the sn-glycerol 3-phosphate site. Residue Ala-144 participates in NADPH binding. Sn-glycerol 3-phosphate-binding residues include Lys-196, Asp-249, Ser-259, Arg-260, and Asn-261. Lys-196 serves as the catalytic Proton acceptor. Arg-260 is an NADPH binding site. NADPH-binding residues include Val-284 and Glu-286.

It belongs to the NAD-dependent glycerol-3-phosphate dehydrogenase family.

The protein resides in the cytoplasm. It carries out the reaction sn-glycerol 3-phosphate + NAD(+) = dihydroxyacetone phosphate + NADH + H(+). The enzyme catalyses sn-glycerol 3-phosphate + NADP(+) = dihydroxyacetone phosphate + NADPH + H(+). It participates in membrane lipid metabolism; glycerophospholipid metabolism. Catalyzes the reduction of the glycolytic intermediate dihydroxyacetone phosphate (DHAP) to sn-glycerol 3-phosphate (G3P), the key precursor for phospholipid synthesis. In Haemophilus ducreyi (strain 35000HP / ATCC 700724), this protein is Glycerol-3-phosphate dehydrogenase [NAD(P)+].